The primary structure comprises 323 residues: uncharacterized protein (323 aa).

This is an uncharacterized protein from Bacillus subtilis (strain 168).